The chain runs to 417 residues: Serine hydroxymethyltransferase 2 (417 aa).

Residues leucine 121 and 125–127 (GHL) each bind (6S)-5,6,7,8-tetrahydrofolate. Lysine 229 is modified (N6-(pyridoxal phosphate)lysine). 354 to 356 (SPF) serves as a coordination point for (6S)-5,6,7,8-tetrahydrofolate.

Belongs to the SHMT family. In terms of assembly, homodimer. It depends on pyridoxal 5'-phosphate as a cofactor.

The protein localises to the cytoplasm. The catalysed reaction is (6R)-5,10-methylene-5,6,7,8-tetrahydrofolate + glycine + H2O = (6S)-5,6,7,8-tetrahydrofolate + L-serine. Its pathway is one-carbon metabolism; tetrahydrofolate interconversion. It functions in the pathway amino-acid biosynthesis; glycine biosynthesis; glycine from L-serine: step 1/1. Its function is as follows. Catalyzes the reversible interconversion of serine and glycine with tetrahydrofolate (THF) serving as the one-carbon carrier. This reaction serves as the major source of one-carbon groups required for the biosynthesis of purines, thymidylate, methionine, and other important biomolecules. Also exhibits THF-independent aldolase activity toward beta-hydroxyamino acids, producing glycine and aldehydes, via a retro-aldol mechanism. This chain is Serine hydroxymethyltransferase 2, found in Pseudomonas fluorescens (strain Pf0-1).